Reading from the N-terminus, the 327-residue chain is GPI-linked NAD(P)(+)--arginine ADP-ribosyltransferase 1 (327 aa).

A signal peptide spans 1-22 (MQMPAMMSLLLVSVGLMEALQA). Cystine bridges form between Cys-53/Cys-277 and Cys-174/Cys-224. N-linked (GlcNAc...) asparagine glycosylation is present at Asn-65. A TR mART core domain is found at 73-273 (QVYADSWTLA…IYLRALGKHS (201 aa)). NAD(+) is bound by residues Tyr-121 and Arg-179. Residues Arg-179 and Ser-202 contribute to the active site. Ser-233 serves as a coordination point for NAD(+). Residue Glu-240 is part of the active site. The N-linked (GlcNAc...) asparagine glycan is linked to Asn-253. Ser-295 is lipidated: GPI-anchor amidated serine. A propeptide spans 296–327 (AMGQSPLSAVWSLLLLLWFLVVRAFPDGPGLL) (removed in mature form).

This sequence belongs to the Arg-specific ADP-ribosyltransferase family.

Its subcellular location is the sarcoplasmic reticulum membrane. It carries out the reaction L-arginyl-[protein] + NAD(+) = N(omega)-(ADP-D-ribosyl)-L-arginyl-[protein] + nicotinamide + H(+). Functionally, has ADP-ribosyltransferase activity toward GLP1R. The sequence is that of GPI-linked NAD(P)(+)--arginine ADP-ribosyltransferase 1 (ART1) from Homo sapiens (Human).